The primary structure comprises 214 residues: dITP/XTP pyrophosphatase (214 aa).

16 to 21 (THNPGK) contributes to the substrate binding site. Mg(2+) contacts are provided by aspartate 48 and aspartate 77. Aspartate 77 (proton acceptor) is an active-site residue. Residues serine 78, 163 to 166 (FGYD), lysine 186, and 198 to 199 (HR) each bind substrate.

Belongs to the HAM1 NTPase family. As to quaternary structure, homodimer. It depends on Mg(2+) as a cofactor.

The catalysed reaction is XTP + H2O = XMP + diphosphate + H(+). It catalyses the reaction dITP + H2O = dIMP + diphosphate + H(+). It carries out the reaction ITP + H2O = IMP + diphosphate + H(+). Its function is as follows. Pyrophosphatase that catalyzes the hydrolysis of nucleoside triphosphates to their monophosphate derivatives, with a high preference for the non-canonical purine nucleotides XTP (xanthosine triphosphate), dITP (deoxyinosine triphosphate) and ITP. Seems to function as a house-cleaning enzyme that removes non-canonical purine nucleotides from the nucleotide pool, thus preventing their incorporation into DNA/RNA and avoiding chromosomal lesions. The chain is dITP/XTP pyrophosphatase from Bradyrhizobium sp. (strain BTAi1 / ATCC BAA-1182).